Reading from the N-terminus, the 479-residue chain is RAC-gamma serine/threonine-protein kinase (479 aa).

N-acetylserine is present on Ser-2. The PH domain maps to 5-107; it reads TIVKEGWVQK…WTEAIQAVAD (103 aa). Cys-59 and Cys-76 are oxidised to a cystine. Positions 148–405 constitute a Protein kinase domain; that stretch reads FDYLKLLGKG…AKEIMRHSFF (258 aa). ATP is bound by residues 154-162 and Lys-177; that span reads LGKGTFGKV. Asp-271 serves as the catalytic Proton acceptor. Cys-293 and Cys-307 are disulfide-bonded. Thr-302 carries O-linked (GlcNAc) threonine glycosylation. Thr-305 carries the phosphothreonine; by PDPK1 modification. Thr-309 carries O-linked (GlcNAc) threonine glycosylation. Residues 406 to 479 enclose the AGC-kinase C-terminal domain; it reads SGVNWQDVYD…QFSYSASGRE (74 aa). Thr-447 bears the Phosphothreonine mark. Residues 458–479 form a disordered region; it reads DCMDNERRPHFPQFSYSASGRE. Ser-472 carries the post-translational modification Phosphoserine; by PKC/PRKCZ. Ser-472 carries O-linked (GlcNAc) serine; alternate glycosylation.

Belongs to the protein kinase superfamily. AGC Ser/Thr protein kinase family. RAC subfamily. Interacts (via PH domain) with TCL1A; this enhances AKT3 phosphorylation and activation. Interacts with TRAF6. Interacts with KCTD20. Interacts with BTBD10. Post-translationally, phosphorylation on Thr-305 and Ser-472 is required for full activity. Phosphorylation of the activation loop at Thr-305 by PDPK1/PDK1 is a prerequisite for full activation. Phosphorylation at Ser-472 by mTORC2 in response to growth factors plays a key role in AKT1 activation by facilitating subsequent phosphorylation of the activation loop by PDPK1/PDK1. Ubiquitinated. When fully phosphorylated and translocated into the nucleus, undergoes 'Lys-48'-polyubiquitination catalyzed by TTC3, leading to its degradation by the proteasome. In terms of processing, O-GlcNAcylation at Thr-302 and Thr-309 inhibits activating phosphorylation at Thr-305 via disrupting the interaction between AKT and PDPK1/PDK1. In adult tissues, it is highly expressed in brain, lung and kidney, but weakly in heart, testis and liver. In fetal tissues, it is highly expressed in heart, liver and brain and not at all in kidney.

It is found in the nucleus. The protein resides in the cytoplasm. It localises to the membrane. The catalysed reaction is L-seryl-[protein] + ATP = O-phospho-L-seryl-[protein] + ADP + H(+). It catalyses the reaction L-threonyl-[protein] + ATP = O-phospho-L-threonyl-[protein] + ADP + H(+). Its activity is regulated as follows. Two specific sites, one in the kinase domain (Thr-305) and the other in the C-terminal regulatory region (Ser-472), need to be phosphorylated for its full activation. IGF-1 leads to the activation of AKT3, which may play a role in regulating cell survival. Its function is as follows. AKT3 is one of 3 closely related serine/threonine-protein kinases (AKT1, AKT2 and AKT3) called the AKT kinase, and which regulate many processes including metabolism, proliferation, cell survival, growth and angiogenesis. This is mediated through serine and/or threonine phosphorylation of a range of downstream substrates. Over 100 substrate candidates have been reported so far, but for most of them, no isoform specificity has been reported. AKT3 is the least studied AKT isoform. It plays an important role in brain development and is crucial for the viability of malignant glioma cells. AKT3 isoform may also be the key molecule in up-regulation and down-regulation of MMP13 via IL13. Required for the coordination of mitochondrial biogenesis with growth factor-induced increases in cellular energy demands. Down-regulation by RNA interference reduces the expression of the phosphorylated form of BAD, resulting in the induction of caspase-dependent apoptosis. The sequence is that of RAC-gamma serine/threonine-protein kinase (AKT3) from Homo sapiens (Human).